A 520-amino-acid polypeptide reads, in one-letter code: MPILPILIGILHLSLAEDAKHLDGFSLPSLPSEHLIRYLNTFPKLKQQLPTNLTGKGTISSACWGHERDCTPAGRFQTPQCPGEHTGWARSKEAQVRTFYNQADFGYIQEQLSQLTPQCVPTYLGDSSLECTHYLRFCRGRNLLFDFRGLEQREERIRYHMDVLGPGQLLGHCKLNRTRLSGEMEHIGSALQSWGPELRNFDVLPHPVLESGLCDVVVNTPTFIMKIDATYNMYHHFCDFFNLYASLFVNQSHPAAFNTDVQILIWETYPYDSPFRDTFKAFSQRPVWTLSDVEGKRVCFKNVVLPLLPRMIFGLFYNTPIIQGCSNSGLFRAFSEFILHRLQIPYKPPQQKIRITYLSRRTKYRQVLNEDELLAPLEANDKYDVQRVSYERLPFTNQLAITRNTDILIGMHGAGLTHLLFLPNWACIFELYNCEDPNCYKDLARLRGVRYRTWEQRDLVYPQDEGHHPEGGAHAKFTNYSFDVKEFVHLVDGAAEEILSHKEFPRRASENPSKTQRNEL.

Residues 1 to 16 form the signal peptide; it reads MPILPILIGILHLSLA. N-linked (GlcNAc...) asparagine glycosylation is found at Asn52, Asn176, and Asn250. A Required for optimal activity motif is present at residues 292-294; it reads DVE. Asn479 is a glycosylation site (N-linked (GlcNAc...) asparagine). A Prevents secretion from ER motif is present at residues 517–520; that stretch reads RNEL.

It depends on a divalent metal cation as a cofactor.

The protein resides in the endoplasmic reticulum lumen. The catalysed reaction is L-seryl-[protein] + UDP-N-acetyl-alpha-D-glucosamine = 3-O-(N-acetyl-beta-D-glucosaminyl)-L-seryl-[protein] + UDP + H(+). It catalyses the reaction L-threonyl-[protein] + UDP-N-acetyl-alpha-D-glucosamine = 3-O-(N-acetyl-beta-D-glucosaminyl)-L-threonyl-[protein] + UDP + H(+). Functionally, catalyzes the transfer of a single N-acetylglucosamine from UDP-GlcNAc to a serine or threonine residue in extracellular proteins resulting in their modification with a beta-linked N-acetylglucosamine (O-GlcNAc). Specifically glycosylates the Thr residue located between the fifth and sixth conserved cysteines of folded EGF-like domains. Involved in epithelial cell adhesion/interaction with the extracellular matrix by mediating glycosylation of proteins in the secretory pathway, such as Dumpy (Dp). In Drosophila melanogaster (Fruit fly), this protein is EGF domain-specific O-linked N-acetylglucosamine transferase (Eogt).